Reading from the N-terminus, the 220-residue chain is MSETQRAFVKRITHETQVQIALALNGGPLEIGQSILGGAKTTVAHQASSSQVINVQTGVGFLDHMIHALAKHSGWSLIVECVGDLHIDDHHTTEDCGLALGQALREAIGQVRGVKRFGTGFAPLDEALSRAVVDLSNRPYAVVDLGLRREKIGDLSTEMIPHFLQSFAESARVTLHVDCLRGTNDHHRSESAFKAVAVALRDALTRTGTDDVPSTKGVLM.

The protein belongs to the imidazoleglycerol-phosphate dehydratase family.

The enzyme catalyses D-erythro-1-(imidazol-4-yl)glycerol 3-phosphate = 3-(imidazol-4-yl)-2-oxopropyl phosphate + H2O. The protein operates within amino-acid biosynthesis; L-histidine biosynthesis; L-histidine from 5-phospho-alpha-D-ribose 1-diphosphate: step 6/9. In Eremothecium gossypii (strain ATCC 10895 / CBS 109.51 / FGSC 9923 / NRRL Y-1056) (Yeast), this protein is Imidazoleglycerol-phosphate dehydratase (HIS3).